We begin with the raw amino-acid sequence, 215 residues long: Variable small protein 6 (215 aa).

An N-terminal signal peptide occupies residues 1 to 18 (MRKRISAIIMTLFMVFMS). Cys-19 is lipidated: N-palmitoyl cysteine. A lipid anchor (S-diacylglycerol cysteine) is attached at Cys-19.

This sequence belongs to the variable small protein (Vsp) family.

The protein resides in the cell outer membrane. Functionally, the Vlp and Vsp proteins are antigenically distinct proteins, only one vlp or vsp gene is transcriptionally active at any one time. Switching between these genes is a mechanism of host immune response evasion. This chain is Variable small protein 6, found in Borrelia hermsii.